The primary structure comprises 225 residues: Membrane protein (225 aa).

Over 1 to 20 (MSNETNCTLDFEQSVQLFKE) the chain is Virion surface. Asn-3 and Asn-6 each carry an N-linked (GlcNAc...) asparagine; by host glycan. Residues 21–41 (YNLFITAFLLFLTIILQYGYA) form a helical membrane-spanning segment. Topologically, residues 42-51 (TRSKVIYTLK) are intravirion. A helical transmembrane segment spans residues 52 to 72 (MIVLWCFWPLNIAVGVISCIY). The Virion surface segment spans residues 73-77 (PPNTG). The helical transmembrane segment at 78-98 (GLVAAIILTVFACLSFVGYWI) threads the bilayer. Topologically, residues 99 to 225 (QSIRLFKRCR…VATGGSSLYT (127 aa)) are intravirion.

Belongs to the gammacoronaviruses M protein family. In terms of assembly, homomultimer. Interacts with envelope E protein in the budding compartment of the host cell, which is located between endoplasmic reticulum and the Golgi complex. Forms a complex with HE and S proteins. Interacts with nucleocapsid N protein. This interaction probably participates in RNA packaging into the virus.

The protein resides in the virion membrane. It localises to the host Golgi apparatus membrane. Functionally, component of the viral envelope that plays a central role in virus morphogenesis and assembly via its interactions with other viral proteins. In Gallus gallus (Chicken), this protein is Membrane protein.